Consider the following 268-residue polypeptide: MMAAAGLESAWEYLITHFSEFQLASIGTFLLHESVFFLSGLPSLLFERLGLFSKYKIQKKSNTPDYQNRCVVRLVLYHVCVNLPLTILSYRTFKFMGLRSTLPLPHWTVVVSQVLFFFVLEDFIFYWGHRALHTKWLYQHVHSVHHEYATPFGLTSEYAHPAEILFLGFATVAGPALTGPHLFTLWVWMVLRVLETVEAHSGYHFPWSPSNFLPLYGGAEFHDYHHRVLYTKSGNYSSTFIYMDWLFGTDKDYRKTKALEEKERTKHL.

4 helical membrane-spanning segments follow: residues 26 to 46 (IGTF…SLLF), 70 to 90 (CVVR…ILSY), 107 to 127 (WTVV…IFYW), and 164 to 184 (ILFL…HLFT). A Fatty acid hydroxylase domain is found at 114–249 (VLFFFVLEDF…FIYMDWLFGT (136 aa)).

Belongs to the sterol desaturase family. In terms of assembly, homodimer.

It localises to the endoplasmic reticulum membrane. The enzyme catalyses a long-chain fatty aldehyde + 2 NADPH + O2 + H(+) = a long-chain alkane + formate + 2 NADP(+) + H2O. Aldehyde decarbonylase involved in the conversion of aldehydes to alkanes. Core component of a very-long-chain alkane synthesis complex. This Oryza sativa subsp. indica (Rice) protein is Very-long-chain aldehyde decarbonylase GL1-8.